The primary structure comprises 752 residues: Probable beta-glucosidase D (752 aa).

An N-terminal signal peptide occupies residues 1 to 18 (MRFVSLAVGAALLGAAGA). Residues N187 and N237 are each glycosylated (N-linked (GlcNAc...) asparagine). Residue D265 is part of the active site. N299, N343, N441, N510, N532, N571, N586, N638, N661, and N743 each carry an N-linked (GlcNAc...) asparagine glycan.

The protein belongs to the glycosyl hydrolase 3 family.

The protein localises to the secreted. It carries out the reaction Hydrolysis of terminal, non-reducing beta-D-glucosyl residues with release of beta-D-glucose.. It participates in glycan metabolism; cellulose degradation. Its function is as follows. Beta-glucosidases are one of a number of cellulolytic enzymes involved in the degradation of cellulosic biomass. Catalyzes the last step releasing glucose from the inhibitory cellobiose. In Aspergillus flavus (strain ATCC 200026 / FGSC A1120 / IAM 13836 / NRRL 3357 / JCM 12722 / SRRC 167), this protein is Probable beta-glucosidase D (bglD).